The sequence spans 828 residues: Periplasmic nitrate reductase (828 aa).

A signal peptide (tat-type signal) is located at residues 1 to 31 (MKLSRRSFMKANAVAAAAAAAGLSVPGVARA). The region spanning 39-95 (IKWDKAPCRFCGTGCGVLVGTQQGRIVACQGDPDAPVNRGLNCIKGYFLPKIMYGKD) is the 4Fe-4S Mo/W bis-MGD-type domain. Positions 46, 49, 53, and 81 each coordinate [4Fe-4S] cluster. Residues lysine 83, glutamine 150, asparagine 175, cysteine 179, 212–219 (WGSNMAEM), 243–247 (STFQH), 262–264 (QSD), methionine 372, glutamine 376, asparagine 482, 508–509 (SD), lysine 531, aspartate 558, and 718–727 (TGRVLEHWHT) contribute to the Mo-bis(molybdopterin guanine dinucleotide) site. Phenylalanine 794 lines the substrate pocket. Mo-bis(molybdopterin guanine dinucleotide) contacts are provided by asparagine 802 and lysine 819.

This sequence belongs to the prokaryotic molybdopterin-containing oxidoreductase family. NasA/NapA/NarB subfamily. As to quaternary structure, component of the periplasmic nitrate reductase NapAB complex composed of NapA and NapB. [4Fe-4S] cluster serves as cofactor. Requires Mo-bis(molybdopterin guanine dinucleotide) as cofactor. Post-translationally, predicted to be exported by the Tat system. The position of the signal peptide cleavage has not been experimentally proven.

The protein resides in the periplasm. The enzyme catalyses 2 Fe(II)-[cytochrome] + nitrate + 2 H(+) = 2 Fe(III)-[cytochrome] + nitrite + H2O. In terms of biological role, catalytic subunit of the periplasmic nitrate reductase complex NapAB. Receives electrons from NapB and catalyzes the reduction of nitrate to nitrite. This is Periplasmic nitrate reductase from Citrobacter koseri (strain ATCC BAA-895 / CDC 4225-83 / SGSC4696).